The sequence spans 234 residues: Core atranone cluster (CAC) protein 1 (234 aa).

It participates in mycotoxin biosynthesis. Its function is as follows. Part of the core atranone cluster (CAC) which products are predicted to catalyze most or all steps of mycotoxin atranone synthesis, starting from geranylgeranyl pyrophosphate (GGPP). The initial cyclization of GGPP to dolabellane is probably performed by the terpene cyclase ATR13. The Baeyer-Villiger oxidation near the end of the atranone synthesis, which converts atranones D and E to atranones F and G is predicted to be catalyzed by the monooxygenase ATR8. Of the CAC's other predicted gene products, the reducing PKS ATR6 might synthesize a polyketide chain. This polyketide is probably transferred onto the atranone backbone by the polyketide transferase ATR5. Other predicted CAC products include 4 oxygenases (ATR2, ATR3, ATR4, and ATR14), 3 short-chain reductases (ATR7, ATR9, and ATR10), and a methyltransferase (ATR12). These may all be involved in the various steps of atranone biosynthesis, although their specific roles must await experimental determination. This is Core atranone cluster (CAC) protein 1 from Stachybotrys chlorohalonatus (strain IBT 40285).